Here is a 183-residue protein sequence, read N- to C-terminus: Ribosome-recycling factor (183 aa).

Belongs to the RRF family.

It localises to the cytoplasm. Its function is as follows. Responsible for the release of ribosomes from messenger RNA at the termination of protein biosynthesis. May increase the efficiency of translation by recycling ribosomes from one round of translation to another. The polypeptide is Ribosome-recycling factor (Christiangramia forsetii (strain DSM 17595 / CGMCC 1.15422 / KT0803) (Gramella forsetii)).